The primary structure comprises 224 residues: Ribonuclease T (224 aa).

One can recognise an Exonuclease domain in the interval 20–194 (VVIDVETAGF…YDTERTAELF (175 aa)). 4 residues coordinate Mg(2+): aspartate 23, glutamate 25, histidine 181, and aspartate 186. Histidine 181 serves as the catalytic Proton donor/acceptor.

The protein belongs to the RNase T family. In terms of assembly, homodimer. It depends on Mg(2+) as a cofactor.

Trims short 3' overhangs of a variety of RNA species, leaving a one or two nucleotide 3' overhang. Responsible for the end-turnover of tRNA: specifically removes the terminal AMP residue from uncharged tRNA (tRNA-C-C-A). Also appears to be involved in tRNA biosynthesis. This chain is Ribonuclease T, found in Shewanella putrefaciens (strain CN-32 / ATCC BAA-453).